Consider the following 486-residue polypeptide: Ribosomal RNA small subunit methyltransferase F (486 aa).

S-adenosyl-L-methionine is bound by residues 124 to 130, glutamate 148, aspartate 175, and aspartate 193; that span reads ASAPGSK. Cysteine 246 functions as the Nucleophile in the catalytic mechanism.

The protein belongs to the class I-like SAM-binding methyltransferase superfamily. RsmB/NOP family.

The protein resides in the cytoplasm. The catalysed reaction is cytidine(1407) in 16S rRNA + S-adenosyl-L-methionine = 5-methylcytidine(1407) in 16S rRNA + S-adenosyl-L-homocysteine + H(+). In terms of biological role, specifically methylates the cytosine at position 1407 (m5C1407) of 16S rRNA. In Shewanella putrefaciens (strain CN-32 / ATCC BAA-453), this protein is Ribosomal RNA small subunit methyltransferase F.